The primary structure comprises 245 residues: MLRVARIMKCLTSSKAAALDAELMAPSGGFSIDQLMELAGLSVAQAVYKYDKSLAQGKQVLVLVGPGNNGGDGLVAARHLCHLGAKPVIYYPKRTDRPLFNGLVTQLHNLDIKFLDDVNKSTFDSSAHVIDSLFGFSFKPPIREPFPKVIELLKETKTPTTSVDIPSSWDVDRGPEDDNAFQPSSLVSLTAPKGASRHLLPSTRHFLGGRFVSKHIADKYDLEVPAYEGLDHIVELTQNNKEAQI.

The YjeF N-terminal domain occupies 16 to 224; the sequence is AAALDAELMA…HIADKYDLEV (209 aa). 68 to 72 contributes to the (6S)-NADPHX binding site; it reads NNGGD. Asparagine 69 and aspartate 131 together coordinate K(+). Residues 135 to 141 and aspartate 164 each bind (6S)-NADPHX; that span reads GFSFKPP. K(+) is bound at residue serine 167.

This sequence belongs to the NnrE/AIBP family. K(+) serves as cofactor.

The protein resides in the cytoplasm. The protein localises to the mitochondrion. It carries out the reaction (6R)-NADHX = (6S)-NADHX. The catalysed reaction is (6R)-NADPHX = (6S)-NADPHX. Catalyzes the epimerization of the S- and R-forms of NAD(P)HX, a damaged form of NAD(P)H that is a result of enzymatic or heat-dependent hydration. This is a prerequisite for the S-specific NAD(P)H-hydrate dehydratase to allow the repair of both epimers of NAD(P)HX. The protein is NAD(P)H-hydrate epimerase of Yarrowia lipolytica (strain CLIB 122 / E 150) (Yeast).